Consider the following 319-residue polypeptide: Homoserine O-acetyltransferase (319 aa).

Cys-142 acts as the Acyl-thioester intermediate in catalysis. Lys-163 and Ser-192 together coordinate substrate. His-235 acts as the Proton acceptor in catalysis. Glu-237 is a catalytic residue. Arg-249 contributes to the substrate binding site.

Belongs to the MetA family.

The protein resides in the cytoplasm. It carries out the reaction L-homoserine + acetyl-CoA = O-acetyl-L-homoserine + CoA. The protein operates within amino-acid biosynthesis; L-methionine biosynthesis via de novo pathway; O-acetyl-L-homoserine from L-homoserine: step 1/1. Its function is as follows. Transfers an acetyl group from acetyl-CoA to L-homoserine, forming acetyl-L-homoserine. The protein is Homoserine O-acetyltransferase of Lactococcus lactis subsp. cremoris (strain MG1363).